The sequence spans 88 residues: Beta-defensin 115 (88 aa).

The first 27 residues, 1-27, serve as a signal peptide directing secretion; it reads MLPDHFSPLSGDIKLSVLALVVLVVLA. 3 cysteine pairs are disulfide-bonded: Cys-38–Cys-65, Cys-45–Cys-59, and Cys-49–Cys-66.

Belongs to the beta-defensin family.

It localises to the secreted. Functionally, has antibacterial activity. This is Beta-defensin 115 (DEFB115) from Homo sapiens (Human).